We begin with the raw amino-acid sequence, 593 residues long: CTD kinase subunit alpha (593 aa).

Composition is skewed to polar residues over residues 1-17 (MSYSKSTIYRRQGTEPN) and 29-51 (QLSGTNEESLGGHTLSSNAFKNN). The interval 1-262 (MSYSKSTIYR…ESVPAPLPSP (262 aa)) is disordered. Serine 56 and serine 58 each carry phosphoserine. The segment covering 90-103 (RSRKSRRRKGKKAF) has biased composition (basic residues). Phosphoserine is present on residues serine 104 and serine 109. Residues 139-152 (SSSSASVSPISPSA) are compositionally biased toward low complexity. Residues 160–170 (QASSFRRSPPS) are compositionally biased toward polar residues. Over residues 198–215 (IPHETTSSDTQKKSSVSS) the composition is skewed to low complexity. The region spanning 277–561 (YEKIDQIGEG…AHETLMHEYF (285 aa)) is the Protein kinase domain. ATP is bound by residues 283–291 (IGEGTYGKV) and lysine 306. The active-site Proton acceptor is aspartate 399.

Belongs to the protein kinase superfamily. CMGC Ser/Thr protein kinase family. CDC2/CDKX subfamily. As to quaternary structure, CTDK-I consists of three subunits, ctk1/lsk1, ctk2/lsc1 and ctk3 (also called alpha, beta and gamma). Interacts with ctk2/lsc1. This interaction is dependent on kinase activity.

It localises to the nucleus. The protein resides in the nucleolus. The catalysed reaction is [DNA-directed RNA polymerase] + ATP = phospho-[DNA-directed RNA polymerase] + ADP + H(+). Functionally, catalytic subunit of the CTDK-I complex, which hyperphosphorylates the C-terminal heptapeptide repeat domain (CTD) of the largest RNA polymerase II subunit. Involved in RNA polymerase II transcriptional elongation and pre-mRNA 3'-end processing. Together with ctk2/lsc1, required for the regulation of cytokinesis by phosphorylating 'Ser-2' residues found in the heptad repeats of the CTD. Required for nuclear localization of ctk2/lsc1. Positively regulates the septation initiation network (SIN) and promotes successful completion of cytokinesis in response to perturbation of the actomyosin ring. Acts in parallel to clp1 to promote actomyosin ring stability upon cytokinesis checkpoint activation. This is CTD kinase subunit alpha from Schizosaccharomyces pombe (strain 972 / ATCC 24843) (Fission yeast).